The following is a 312-amino-acid chain: Methionyl-tRNA formyltransferase (312 aa).

110–113 (SLLP) lines the (6S)-5,6,7,8-tetrahydrofolate pocket.

It belongs to the Fmt family.

It catalyses the reaction L-methionyl-tRNA(fMet) + (6R)-10-formyltetrahydrofolate = N-formyl-L-methionyl-tRNA(fMet) + (6S)-5,6,7,8-tetrahydrofolate + H(+). Functionally, attaches a formyl group to the free amino group of methionyl-tRNA(fMet). The formyl group appears to play a dual role in the initiator identity of N-formylmethionyl-tRNA by promoting its recognition by IF2 and preventing the misappropriation of this tRNA by the elongation apparatus. The chain is Methionyl-tRNA formyltransferase from Mycobacterium ulcerans (strain Agy99).